The following is a 435-amino-acid chain: 3-ketoacyl-CoA thiolase (435 aa).

The active-site Acyl-thioester intermediate is cysteine 98. Active-site proton acceptor residues include histidine 391 and cysteine 421.

Belongs to the thiolase-like superfamily. Thiolase family. Heterotetramer of two alpha chains (FadJ) and two beta chains (FadI).

Its subcellular location is the cytoplasm. It catalyses the reaction an acyl-CoA + acetyl-CoA = a 3-oxoacyl-CoA + CoA. It functions in the pathway lipid metabolism; fatty acid beta-oxidation. Functionally, catalyzes the final step of fatty acid oxidation in which acetyl-CoA is released and the CoA ester of a fatty acid two carbons shorter is formed. This Colwellia psychrerythraea (strain 34H / ATCC BAA-681) (Vibrio psychroerythus) protein is 3-ketoacyl-CoA thiolase.